The sequence spans 301 residues: MHPCRRSLPFPLNCQLVKVGTADYGGASDQSDQQLDCALDLMRRLPPQQIEKNLSDLIDLVPSLCEDLLSSVDQPLKIARDKVVGKDYLLCDYNRDGDSYRSPWSNKYDPPLEDGAMPSARLRKLEVEANNAFDQYRDLYFEGGVSSVYLWDLDHGFAGVILIKKAGDGSKKIKGCWDSIHVVEVQEKSSGRTAHYKLTSTVMLWLQTNKSGSGTMNLGGSLTRQMEKDETVSDCSPHIANIGRLVEDMENKIRSTLNEIYFGKTKDIVNGLRSVQTFADKSKQEALKNDLVEALKRKQQC.

At Ser31 the chain carries Phosphoserine. Position 264 is an N6-acetyllysine (Lys264).

Belongs to the F-actin-capping protein beta subunit family. Component of the F-actin capping complex, composed of a heterodimer of an alpha and a beta subunit. Subunit of dynactin, a multiprotein complex part of a tripartite complex with dynein and a adapter, such as BICDL1, BICD2 or HOOK3. The dynactin complex is built around ACTR1A/ACTB filament and consists of an actin-related filament composed of a shoulder domain, a pointed end and a barbed end. Its length is defined by its flexible shoulder domain. The soulder is composed of 2 DCTN1 subunits, 4 DCTN2 and 2 DCTN3. The 4 DCNT2 (via N-terminus) bind the ACTR1A filament and act as molecular rulers to determine the length. The pointed end is important for binding dynein-dynactin cargo adapters. Consists of 4 subunits: ACTR10, DCNT4, DCTN5 and DCTN6. The barbed end is composed of a CAPZA1:CAPZB heterodimers, which binds ACTR1A/ACTB filament and dynactin and stabilizes dynactin. Interacts with ARHGAP17. Interaction with RCSD1/CAPZIP. Component of the WASH complex, composed of F-actin-capping protein subunit alpha (CAPZA1, CAPZA2 or CAPZA3), F-actin-capping protein subunit beta (CAPZB), WASH (WASHC1, WASH2P, WASH3P, WASH4P, WASH5P or WASH6P), WASHC2 (WASHC2A or WASHC2C), WASHC3, WASHC4 and WASHC5. Interacts with ACTG1. Directly interacts with CRACD; this interaction decreases binding to actin. In terms of tissue distribution, the isoform beta-3 is predominantly expressed in the testis. It is only detected in total sperm, sperm heads and the calyx fraction, but not in sperm tails or any supernatant fraction. Weaker expression also found in brain.

It is found in the cytoplasm. It localises to the cytoskeleton. The protein resides in the perinuclear theca. The protein localises to the calyx. F-actin-capping proteins bind in a Ca(2+)-independent manner to the fast growing ends of actin filaments (barbed end) thereby blocking the exchange of subunits at these ends. Unlike other capping proteins (such as gelsolin and severin), these proteins do not sever actin filaments. Plays a role in the regulation of cell morphology and cytoskeletal organization. Forms, with CAPZB, the barbed end of the fast growing ends of actin filaments in the dynactin complex and stabilizes dynactin structure. The dynactin multiprotein complex activates the molecular motor dynein for ultra-processive transport along microtubules. This chain is F-actin-capping protein subunit beta (CAPZB), found in Bos taurus (Bovine).